A 616-amino-acid chain; its full sequence is Dihydroxy-acid dehydratase (616 aa).

Asp81 contacts Mg(2+). Cys122 provides a ligand contact to [2Fe-2S] cluster. 2 residues coordinate Mg(2+): Asp123 and Lys124. At Lys124 the chain carries N6-carboxylysine. Cys195 lines the [2Fe-2S] cluster pocket. Glu491 provides a ligand contact to Mg(2+). Catalysis depends on Ser517, which acts as the Proton acceptor.

The protein belongs to the IlvD/Edd family. As to quaternary structure, homodimer. [2Fe-2S] cluster serves as cofactor. The cofactor is Mg(2+).

It catalyses the reaction (2R)-2,3-dihydroxy-3-methylbutanoate = 3-methyl-2-oxobutanoate + H2O. It carries out the reaction (2R,3R)-2,3-dihydroxy-3-methylpentanoate = (S)-3-methyl-2-oxopentanoate + H2O. Its pathway is amino-acid biosynthesis; L-isoleucine biosynthesis; L-isoleucine from 2-oxobutanoate: step 3/4. It functions in the pathway amino-acid biosynthesis; L-valine biosynthesis; L-valine from pyruvate: step 3/4. In terms of biological role, functions in the biosynthesis of branched-chain amino acids. Catalyzes the dehydration of (2R,3R)-2,3-dihydroxy-3-methylpentanoate (2,3-dihydroxy-3-methylvalerate) into 2-oxo-3-methylpentanoate (2-oxo-3-methylvalerate) and of (2R)-2,3-dihydroxy-3-methylbutanoate (2,3-dihydroxyisovalerate) into 2-oxo-3-methylbutanoate (2-oxoisovalerate), the penultimate precursor to L-isoleucine and L-valine, respectively. The chain is Dihydroxy-acid dehydratase from Escherichia coli O127:H6 (strain E2348/69 / EPEC).